We begin with the raw amino-acid sequence, 187 residues long: uncharacterized protein (187 aa).

Positions 26 to 157 (NRHAAVLLPI…YLDVSRRGQQ (132 aa)) constitute a Nudix hydrolase domain. The Nudix box motif lies at 64–86 (GVADPKDKSIIATALREAEEEVN). Mg(2+) is bound by residues E80 and E84.

It belongs to the Nudix hydrolase family. PCD1 subfamily. The cofactor is Mn(2+). It depends on Mg(2+) as a cofactor.

Functionally, probably mediates the hydrolysis of some nucleoside diphosphate derivatives. This is an uncharacterized protein from Photorhabdus laumondii subsp. laumondii (strain DSM 15139 / CIP 105565 / TT01) (Photorhabdus luminescens subsp. laumondii).